The primary structure comprises 451 residues: Chromosomal replication initiator protein DnaA (451 aa).

Residues 1-72 form a domain I, interacts with DnaA modulators region; sequence MQSIEDIWQE…ANILQEITGR (72 aa). The segment at 72–108 is domain II; sequence RLFDVRFIDGEQEENFEYTVIKPNPALDEDGVEIGKH. Residues 109-325 form a domain III, AAA+ region region; the sequence is MLNPRYVFDT…GALIRVVAYS (217 aa). The ATP site is built by Gly153, Gly155, Lys156, and Thr157. A domain IV, binds dsDNA region spans residues 326-451; sequence SLVNKDITAG…KNLRKAQNMF (126 aa).

The protein belongs to the DnaA family. In terms of assembly, oligomerizes as a right-handed, spiral filament on DNA at oriC.

Its subcellular location is the cytoplasm. Functionally, plays an essential role in the initiation and regulation of chromosomal replication. ATP-DnaA binds to the origin of replication (oriC) to initiate formation of the DNA replication initiation complex once per cell cycle. Binds the DnaA box (a 9 base pair repeat at the origin) and separates the double-stranded (ds)DNA. Forms a right-handed helical filament on oriC DNA; dsDNA binds to the exterior of the filament while single-stranded (ss)DNA is stabiized in the filament's interior. The ATP-DnaA-oriC complex binds and stabilizes one strand of the AT-rich DNA unwinding element (DUE), permitting loading of DNA polymerase. After initiation quickly degrades to an ADP-DnaA complex that is not apt for DNA replication. Binds acidic phospholipids. The sequence is that of Chromosomal replication initiator protein DnaA from Listeria monocytogenes serotype 4b (strain CLIP80459).